The following is a 293-amino-acid chain: Ribosomal RNA small subunit methyltransferase A (293 aa).

N33, V35, G60, E81, D111, and N130 together coordinate S-adenosyl-L-methionine.

This sequence belongs to the class I-like SAM-binding methyltransferase superfamily. rRNA adenine N(6)-methyltransferase family. RsmA subfamily.

The protein resides in the cytoplasm. It catalyses the reaction adenosine(1518)/adenosine(1519) in 16S rRNA + 4 S-adenosyl-L-methionine = N(6)-dimethyladenosine(1518)/N(6)-dimethyladenosine(1519) in 16S rRNA + 4 S-adenosyl-L-homocysteine + 4 H(+). Functionally, specifically dimethylates two adjacent adenosines (A1518 and A1519) in the loop of a conserved hairpin near the 3'-end of 16S rRNA in the 30S particle. May play a critical role in biogenesis of 30S subunits. The sequence is that of Ribosomal RNA small subunit methyltransferase A from Corynebacterium glutamicum (strain R).